Reading from the N-terminus, the 716-residue chain is Zinc finger protein 840 (716 aa).

The 72-residue stretch at 42–113 (VRFRDVAVVF…EREVTGDPCP (72 aa)) folds into the KRAB domain. C2H2-type zinc fingers lie at residues 151–173 (YECD…QKIH), 207–229 (FECN…QSMH), 235–257 (YKCD…QRFH), 277–299 (FSCN…LLIH), 305–327 (YTCN…QRTH), 333–355 (HKCD…QKTH), 361–383 (FSCN…QQIH), 389–411 (FICS…KGTH), 417–439 (YQCT…QKTH), 445–467 (FACN…KKIH), 473–495 (YECG…KKIH), 501–523 (FVCN…QRTH), 549–571 (FPCN…QQIH), 577–599 (FICS…KGTH), 605–627 (YQCT…QKTH), 633–655 (FTCN…KKIH), 661–683 (YECG…KKIH), and 689–711 (FVCN…QITH). The segment at 515 to 548 (KLSRHQRTHNKKENSSKSVSNLNKHQKTHAGEKP) is disordered.

It belongs to the krueppel C2H2-type zinc-finger protein family.

It localises to the nucleus. In terms of biological role, may be involved in transcriptional regulation. The protein is Zinc finger protein 840 (ZNF840P) of Homo sapiens (Human).